A 506-amino-acid polypeptide reads, in one-letter code: Galactose/methyl galactoside import ATP-binding protein MglA (506 aa).

ABC transporter domains follow at residues 14-249 and 264-506; these read LEMS…VGRS and VILE…SLHL. Residue 46–53 participates in ATP binding; sequence GENGAGKS.

The protein belongs to the ABC transporter superfamily. Galactose/methyl galactoside importer (TC 3.A.1.2.3) family. In terms of assembly, the complex is composed of one ATP-binding protein (MglA), two transmembrane proteins (MglC) and a solute-binding protein (MglB).

It localises to the cell inner membrane. It catalyses the reaction D-galactose(out) + ATP + H2O = D-galactose(in) + ADP + phosphate + H(+). The enzyme catalyses methyl beta-D-galactoside(out) + ATP + H2O = methyl beta-D-galactoside(in) + ADP + phosphate + H(+). In terms of biological role, part of the ABC transporter complex MglABC involved in galactose/methyl galactoside import. Responsible for energy coupling to the transport system. The sequence is that of Galactose/methyl galactoside import ATP-binding protein MglA from Shigella boydii serotype 4 (strain Sb227).